Here is a 448-residue protein sequence, read N- to C-terminus: Trigger factor (448 aa).

Positions 163 to 248 constitute a PPIase FKBP-type domain; that stretch reads GDIVVIDFDG…VKDIRVPKAA (86 aa).

The protein belongs to the FKBP-type PPIase family. Tig subfamily.

Its subcellular location is the cytoplasm. It catalyses the reaction [protein]-peptidylproline (omega=180) = [protein]-peptidylproline (omega=0). In terms of biological role, involved in protein export. Acts as a chaperone by maintaining the newly synthesized protein in an open conformation. Functions as a peptidyl-prolyl cis-trans isomerase. The chain is Trigger factor from Rhodospirillum centenum (strain ATCC 51521 / SW).